The chain runs to 84 residues: Cell division topological specificity factor (84 aa).

Belongs to the MinE family.

Prevents the cell division inhibition by proteins MinC and MinD at internal division sites while permitting inhibition at polar sites. This ensures cell division at the proper site by restricting the formation of a division septum at the midpoint of the long axis of the cell. This is Cell division topological specificity factor from Burkholderia mallei (strain NCTC 10247).